Reading from the N-terminus, the 190-residue chain is Major intrinsically disordered NOTCH2-binding receptor 1-like (190 aa).

Phosphoserine is present on Ser79. N-linked (GlcNAc...) asparagine glycans are attached at residues Asn109 and Asn125. Residues 169 to 189 form a helical membrane-spanning segment; the sequence is GLILLVVISILVTIVTIITFF.

Belongs to the MINAR family. As to quaternary structure, interacts with NOTCH2. As to expression, highly expressed in the auditory hair cells.

Its subcellular location is the lysosome membrane. The protein localises to the endoplasmic reticulum membrane. Functionally, binds cholesterol and may regulate the distribution and homeostasis of cholesterol in hair cells. May play a role in angiogenesis. This is Major intrinsically disordered NOTCH2-binding receptor 1-like from Homo sapiens (Human).